The sequence spans 231 residues: 2,3-bisphosphoglycerate-dependent phosphoglycerate mutase (231 aa).

Residues 8-15 (RHGESEWN), 21-22 (TG), R60, 87-90 (ERHY), K98, 114-115 (RR), and 183-184 (GN) contribute to the substrate site. The Tele-phosphohistidine intermediate role is filled by H9. Catalysis depends on E87, which acts as the Proton donor/acceptor.

It belongs to the phosphoglycerate mutase family. BPG-dependent PGAM subfamily.

The catalysed reaction is (2R)-2-phosphoglycerate = (2R)-3-phosphoglycerate. Its pathway is carbohydrate degradation; glycolysis; pyruvate from D-glyceraldehyde 3-phosphate: step 3/5. Catalyzes the interconversion of 2-phosphoglycerate and 3-phosphoglycerate. The chain is 2,3-bisphosphoglycerate-dependent phosphoglycerate mutase from Streptococcus pyogenes serotype M49 (strain NZ131).